Here is a 170-residue protein sequence, read N- to C-terminus: Flavodoxin (170 aa).

The Flavodoxin-like domain occupies 5–165 (IGLFYGTQTG…RIKSWVAQLK (161 aa)).

Belongs to the flavodoxin family. Requires FMN as cofactor.

Functionally, low-potential electron donor to a number of redox enzymes. This is Flavodoxin (isiB) from Nostoc sp. (strain PCC 7120 / SAG 25.82 / UTEX 2576).